The chain runs to 250 residues: Triosephosphate isomerase (250 aa).

9 to 11 (NWK) is a binding site for substrate. The active-site Electrophile is the histidine 96. The active-site Proton acceptor is glutamate 166. Substrate contacts are provided by residues glycine 172, serine 212, and 233-234 (GG).

The protein belongs to the triosephosphate isomerase family. Homodimer.

It is found in the cytoplasm. The enzyme catalyses D-glyceraldehyde 3-phosphate = dihydroxyacetone phosphate. It functions in the pathway carbohydrate biosynthesis; gluconeogenesis. The protein operates within carbohydrate degradation; glycolysis; D-glyceraldehyde 3-phosphate from glycerone phosphate: step 1/1. Involved in the gluconeogenesis. Catalyzes stereospecifically the conversion of dihydroxyacetone phosphate (DHAP) to D-glyceraldehyde-3-phosphate (G3P). In Chlorobium phaeobacteroides (strain BS1), this protein is Triosephosphate isomerase.